The primary structure comprises 451 residues: Exodeoxyribonuclease 7 large subunit (451 aa).

This sequence belongs to the XseA family. Heterooligomer composed of large and small subunits.

It localises to the cytoplasm. It catalyses the reaction Exonucleolytic cleavage in either 5'- to 3'- or 3'- to 5'-direction to yield nucleoside 5'-phosphates.. Bidirectionally degrades single-stranded DNA into large acid-insoluble oligonucleotides, which are then degraded further into small acid-soluble oligonucleotides. This chain is Exodeoxyribonuclease 7 large subunit, found in Neisseria meningitidis serogroup B (strain ATCC BAA-335 / MC58).